The sequence spans 219 residues: PKHD-type hydroxylase AM1_3707 (219 aa).

The region spanning 78-172 is the Fe2OG dioxygenase domain; it reads SIHTLLFSRY…RLVAVGWVQS (95 aa). The Fe cation site is built by His96, Asp98, and His153. Arg163 is a binding site for 2-oxoglutarate.

Fe(2+) is required as a cofactor. The cofactor is L-ascorbate.

In Acaryochloris marina (strain MBIC 11017), this protein is PKHD-type hydroxylase AM1_3707.